The following is a 483-amino-acid chain: Arginine/agmatine antiporter (483 aa).

A run of 12 helical transmembrane segments spans residues 11-33, 48-70, 90-112, 127-149, 156-178, 209-228, 241-263, 293-315, 335-357, 367-389, 415-435, and 458-477; these read ILGT…IFSL, LAWM…LSII, VGFT…YAVI, GGNT…YIVL, SFVN…LITA, TMLV…VISG, ILGF…GSLF, TGLL…EIPY, APSF…VYFS, ITGV…FSLS, LWLI…LLAL, and EILK…FLFS.

This sequence belongs to the amino acid-polyamine-organocation (APC) superfamily. Basic amino acid/polyamine antiporter (APA) (TC 2.A.3.2) family.

Its subcellular location is the cell inner membrane. In terms of biological role, catalyzes the exchange of L-arginine for agmatine. The arginine uptake by the bacterium in the macrophage may be a virulence factor against the host innate immune response. This Chlamydia trachomatis serovar L2 (strain ATCC VR-902B / DSM 19102 / 434/Bu) protein is Arginine/agmatine antiporter (aaxC).